The chain runs to 397 residues: Guanine nucleotide-binding protein G(s) subunit alpha (397 aa).

The segment at 1–23 is disordered; the sequence is MGCLGNSKTEDQRNEEKAQREAN. The N-palmitoyl glycine moiety is linked to residue Gly2. A lipid anchor (S-palmitoyl cysteine) is attached at Cys3. Over residues 8–23 the composition is skewed to basic and acidic residues; that stretch reads KTEDQRNEEKAQREAN. Residues 39–397 enclose the G-alpha domain; sequence ATHRLLLLGA…RMHLRQYELL (359 aa). Residues 42–55 are G1 motif; the sequence is RLLLLGAGESGKST. GTP is bound by residues 47 to 55, 182 to 189, 208 to 212, 277 to 280, and Ala369; these read GAGESGKST, LLRCRVLT, DVGGQ, and NKQD. Positions 54 and 189 each coordinate Mg(2+). Residues 181-189 are G2 motif; that stretch reads DLLRCRVLT. Residues 204 to 213 are G3 motif; sequence FHMFDVGGQR. Residues 273–280 are G4 motif; sequence ILFLNKQD. The G5 motif stretch occupies residues 367 to 372; it reads TCAVDT.

Belongs to the G-alpha family. G(s) subfamily. Heterotrimeric G proteins are composed of 3 units; alpha, beta and gamma. The alpha chain contains the guanine nucleotide binding site. Interacts with CRY1; the interaction may block GPCR-mediated regulation of cAMP concentrations. Interacts with ADCY6 and stimulates its adenylyl cyclase activity. Interacts with ADCY2 and ADCY5. Stimulates the ADCY5 adenylyl cyclase activity. Interaction with SASH1.

It localises to the cell membrane. Its function is as follows. Guanine nucleotide-binding proteins (G proteins) function as transducers in numerous signaling pathways controlled by G protein-coupled receptors (GPCRs). Signaling involves the activation of adenylyl cyclases, resulting in increased levels of the signaling molecule cAMP. GNAS functions downstream of several GPCRs, including beta-adrenergic receptors. Stimulates the Ras signaling pathway via RAPGEF2. This chain is Guanine nucleotide-binding protein G(s) subunit alpha (GNAS), found in Sus scrofa (Pig).